We begin with the raw amino-acid sequence, 146 residues long: Large ribosomal subunit protein uL15 (146 aa).

Residues 1-13 (MKLHELKPAEGSR) are compositionally biased toward basic and acidic residues. The disordered stretch occupies residues 1-59 (MKLHELKPAEGSRKVRNRVGRGTSSGNGKTSGRGQKGQKARSGGGVRLGFEGGQTPLFR). 2 stretches are compositionally biased toward gly residues: residues 23–35 (TSSG…GRGQ) and 42–52 (SGGGVRLGFEG).

It belongs to the universal ribosomal protein uL15 family. Part of the 50S ribosomal subunit.

In terms of biological role, binds to the 23S rRNA. The sequence is that of Large ribosomal subunit protein uL15 from Streptococcus agalactiae serotype Ia (strain ATCC 27591 / A909 / CDC SS700).